Reading from the N-terminus, the 179-residue chain is Inner membrane-spanning protein YciB (179 aa).

A run of 5 helical transmembrane segments spans residues 22-42 (IYAATTALIVATAIVLIYSWV), 50-70 (MALITFVLVVVFGGLTLFFHN), 76-96 (WKVTVIYALFAGALLVSQWVM), 121-141 (LAWAVFFILCGLANIYIAFWL), and 149-169 (FKVFGLTALTLIFTLLSGIYI).

It belongs to the YciB family.

It is found in the cell inner membrane. Functionally, plays a role in cell envelope biogenesis, maintenance of cell envelope integrity and membrane homeostasis. This Shigella dysenteriae serotype 1 (strain Sd197) protein is Inner membrane-spanning protein YciB.